Here is a 273-residue protein sequence, read N- to C-terminus: Large ribosomal subunit protein uL2 (273 aa).

2 disordered regions span residues 28-53 and 221-273; these read KPFAPLLEKNSKSGGRNNNGRITTRH and RGTA…RRSK. Over residues 39–48 the composition is skewed to low complexity; sequence KSGGRNNNGR. Lysine 242 carries the N6-acetyllysine modification.

It belongs to the universal ribosomal protein uL2 family. As to quaternary structure, part of the 50S ribosomal subunit. Forms a bridge to the 30S subunit in the 70S ribosome.

In terms of biological role, one of the primary rRNA binding proteins. Required for association of the 30S and 50S subunits to form the 70S ribosome, for tRNA binding and peptide bond formation. It has been suggested to have peptidyltransferase activity; this is somewhat controversial. Makes several contacts with the 16S rRNA in the 70S ribosome. This Shigella dysenteriae serotype 1 (strain Sd197) protein is Large ribosomal subunit protein uL2.